An 862-amino-acid chain; its full sequence is Cadherin-related family member 5 (862 aa).

Residues 1–28 (MGAPALLWPPLLLPLLTVLFGHLPGTLA) form the signal peptide. At 29 to 671 (QAQVCSANQT…GQRFSTVDMA (643 aa)) the chain is on the extracellular side. N-linked (GlcNAc...) asparagine glycosylation is found at N36, N45, N135, N173, N201, N311, N408, N438, and N479. 4 consecutive Cadherin domains span residues 40 to 127 (FTMN…APEF), 128 to 240 (PFTI…TPWF), 252 to 357 (IQAQ…PLQF), and 358 to 462 (SQSL…PPST). A disordered region spans residues 452–658 (IQVSEREPPS…TTGPISGVGE (207 aa)). Over residues 461–500 (STESPTPPEAGGTTGPSSNTTLETPSTSGTSQGPATTSSG) the composition is skewed to low complexity. Residues 529–652 (LGISTSPQTA…GTSQPTTTGP (124 aa)) show a composition bias toward polar residues. Repeat copies occupy residues 545–575 (TQTP…SGSS), 576–606 (TQTP…SGSS), and 607–636 (TQTP…PSGS). The tract at residues 545–648 (TQTPKPGTSQ…TPKPGTSQPT (104 aa)) is 4 X 31 AA approximate tandem repeats. Residues 637-648 (TQTPKPGTSQPT) form a 4; truncated repeat. A helical membrane pass occupies residues 672–692 (VLGGVLGALLLLALIFLIILI). Residues 693–862 (HKHYRHRFTC…LGAVADNTYV (170 aa)) are Cytoplasmic-facing. The tract at residues 693 to 862 (HKHYRHRFTC…LGAVADNTYV (170 aa)) is mediates interaction with USH1C and MYO7B and is required for proper localization to microvilli tips and function in microvilli organization. 2 disordered regions span residues 706–803 (KAKE…EGGY) and 821–862 (LNEP…NTYV). 3 positions are modified to phosphoserine: S729, S751, and S755. The span at 739–768 (GPEPVQPPLRPPSPMSSSPTPPSSMPPSPQ) shows a compositional bias: pro residues. At T758 the chain carries Phosphothreonine. Residues S766 and S783 each carry the phosphoserine modification. Over residues 791 to 801 (LTKERRPEGEG) the composition is skewed to basic and acidic residues. T825 is modified (phosphothreonine). A compositionally biased stretch (low complexity) spans 827 to 837 (DVDSASASGSE). S832, S834, and S836 each carry phosphoserine.

In terms of assembly, part of the IMAC/intermicrovillar adhesion complex/intermicrovillar tip-link complex composed of ANKS4B, MYO7B, USH1C, CDHR2 and CDHR5. Interacts (via cytoplasmic domain) with USH1C and MYO7B; required for proper localization of CDHR5 to microvilli tips and its function in brush border differentiation. N- and O-glycosylated. Expressed predominantly in kidney. Also detected in lung and small intestine.

It localises to the apical cell membrane. Its subcellular location is the cell projection. It is found in the microvillus membrane. Its function is as follows. Intermicrovillar adhesion molecule that forms, via its extracellular domain, calcium-dependent heterophilic complexes with CDHR2 on adjacent microvilli. Thereby, controls the packing of microvilli at the apical membrane of epithelial cells. Through its cytoplasmic domain, interacts with microvillus cytoplasmic proteins to form the intermicrovillar adhesion complex/IMAC. This complex plays a central role in microvilli and epithelial brush border differentiation. The chain is Cadherin-related family member 5 from Rattus norvegicus (Rat).